The following is a 235-amino-acid chain: Transcription factor MYB59 (235 aa).

HTH myb-type domains lie at 5–57 (QEEY…VNYL) and 58–112 (HPGL…RKKA). The H-T-H motif DNA-binding region spans 33 to 57 (WDFVAKVSGLNRTGKSCRLRWVNYL). Residues 62–65 (KRGK) carry the Bipartite nuclear localization signal 1 motif. Residues 85–108 (WSKIARKLPGRTDNEIKNYWRTHM) constitute a DNA-binding region (H-T-H motif). The Bipartite nuclear localization signal 2 signature appears at 109-117 (RKKAQEKKR). Positions 109 to 147 (RKKAQEKKRPMSPTSSSSNCCSSSMTTTTSQDTGGSNGK) are disordered. Residues 119–138 (MSPTSSSSNCCSSSMTTTTS) are compositionally biased toward low complexity.

Mainly expressed in leaves and seedlings, and to a lower extent, in roots, stems and inflorescences. Isoform MYB59-1 and isoform MYB59-2 are present in roots, leaves, and seedlings, while the expression of isoform MYB59-3 and isoform MYB59-4 is confined to seedlings.

It localises to the nucleus. Its function is as follows. Transcription factor. The polypeptide is Transcription factor MYB59 (MYB59) (Arabidopsis thaliana (Mouse-ear cress)).